The primary structure comprises 435 residues: Probable long-chain-alcohol O-fatty-acyltransferase 11 (435 aa).

The next 11 membrane-spanning stretches (helical) occupy residues 7–27, 36–56, 59–79, 120–140, 149–169, 200–220, 238–258, 263–283, 300–320, 363–383, and 406–426; these read NLIK…YVPT, FLSV…FASV, SGYT…LFSF, PIEV…SVVL, IYPI…LEIL, DFWG…DVYA, LGVF…FFYI, PTGE…AYDA, CLIL…WLFF, FFTG…IGFV, and FFIG…IGFV.

It belongs to the wax synthase family.

Its subcellular location is the membrane. It catalyses the reaction a long chain fatty alcohol + a fatty acyl-CoA = a wax ester + CoA. Catalyzes the final step in the synthesis of long-chain linear esters (waxes). The polypeptide is Probable long-chain-alcohol O-fatty-acyltransferase 11 (Arabidopsis thaliana (Mouse-ear cress)).